A 386-amino-acid polypeptide reads, in one-letter code: Succinate--CoA ligase [ADP-forming] subunit beta (386 aa).

The ATP-grasp domain occupies 9–244 (KEILRKYGVP…HDEEDPLETR (236 aa)). Residues Lys-46, 53-55 (GRG), Glu-99, Cys-102, and Glu-107 contribute to the ATP site. Mg(2+) is bound by residues Asn-199 and Asp-213. Substrate-binding positions include Asn-264 and 321–323 (GIM).

The protein belongs to the succinate/malate CoA ligase beta subunit family. In terms of assembly, heterotetramer of two alpha and two beta subunits. It depends on Mg(2+) as a cofactor.

It carries out the reaction succinate + ATP + CoA = succinyl-CoA + ADP + phosphate. It catalyses the reaction GTP + succinate + CoA = succinyl-CoA + GDP + phosphate. Its pathway is carbohydrate metabolism; tricarboxylic acid cycle; succinate from succinyl-CoA (ligase route): step 1/1. Its function is as follows. Succinyl-CoA synthetase functions in the citric acid cycle (TCA), coupling the hydrolysis of succinyl-CoA to the synthesis of either ATP or GTP and thus represents the only step of substrate-level phosphorylation in the TCA. The beta subunit provides nucleotide specificity of the enzyme and binds the substrate succinate, while the binding sites for coenzyme A and phosphate are found in the alpha subunit. This is Succinate--CoA ligase [ADP-forming] subunit beta from Rickettsia felis (strain ATCC VR-1525 / URRWXCal2) (Rickettsia azadi).